The sequence spans 1239 residues: DNA polymerase subunit gamma-1 (1239 aa).

The segment at 1-68 is disordered; sequence MSRLLWRKVA…PQVLSSEGGQ (68 aa). Low complexity-rich tracts occupy residues 9-36 and 44-60; these read VAGATVGPGPVPAPGRWVSSSVPASDPS and QQQQQQQQQQQQPQQPQ. The segment at 43–55 is does not contribute to polymerase and exonuclease enzymatic activities; the sequence is QQQQQQQQQQQQQ. The short motif at 196 to 200 is the Exo I element; the sequence is VFDVE. Residue D198 is the Exonuclease activity of the active site. Residues 267-275 carry the Exo II motif; the sequence is VGHNVSFDR. S306 contributes to the DNA binding site. The tract at residues 318-340 is disordered; sequence GKHKVQPPTKQGQKSQRKARRGP. The Exo III signature appears at 395-403; the sequence is YCAQDVWAT. The disordered stretch occupies residues 506–531; the sequence is EPATASKLPIEGAGAPGDPMDQEDLG. Positions 510-571 are accessory-interacting determinant; it reads ASKLPIEGAG…RPQHLPGHPG (62 aa). R579 is an RNA binding site. DNA is bound at residue S593. Residues H754, G763, and K768 each contribute to the RNA site. Residues K806 and T849 each coordinate DNA. Residues 858–864 form a trigger loop region; it reads TWLTASN. Positions 863 and 869 each coordinate RNA. The Pol A motif lies at 887-896; sequence VGADVDSQEL. 7 residues coordinate a 2'-deoxyribonucleoside 5'-triphosphate: D890, V891, S893, E895, R943, K947, and Y951. Mg(2+) contacts are provided by D890 and V891. The Pol B signature appears at 943 to 958; that stretch reads REHAKIFNYGRIYGAG. T1094 and S1095 together coordinate DNA. A Pol C motif is present at residues 1134-1141; that stretch reads HDEVRYLV. D1135 is a binding site for a 2'-deoxyribonucleoside 5'-triphosphate. D1135 is a Mg(2+) binding site.

It belongs to the DNA polymerase type-A family. In terms of assembly, heterotrimer composed of a catalytic subunit and a homodimer of accessory subunits (POLG:POLG2). Interacts with TTC3. Interacts with LIG3. Mg(2+) serves as cofactor.

It is found in the mitochondrion. The protein localises to the mitochondrion matrix. It localises to the mitochondrion nucleoid. The catalysed reaction is DNA(n) + a 2'-deoxyribonucleoside 5'-triphosphate = DNA(n+1) + diphosphate. It carries out the reaction a 3'-end 2'-deoxyribonucleotidyl-deoxyribonucleotide-DNA + H2O = a 3'-end 2'-deoxyribonucleotide-DNA + a 2'-deoxyribonucleoside 5'-phosphate + H(+). The enzyme catalyses a 5'-end 2'-deoxyribose-2'-deoxyribonucleotide-DNA = (2E,4S)-4-hydroxypenten-2-al-5-phosphate + a 5'-end 5'-phospho-2'-deoxyribonucleoside-DNA + H(+). Inhibited by dideoxynucleotides such as antiviral agent zalcitabine. Its function is as follows. Catalytic subunit of DNA polymerase gamma solely responsible for replication of mitochondrial DNA (mtDNA). Replicates both heavy and light strands of the circular mtDNA genome using a single-stranded DNA template, RNA primers and the four deoxyribonucleoside triphosphates as substrates. Has 5' -&gt; 3' polymerase activity. Functionally interacts with TWNK and SSBP1 at the replication fork to form a highly processive replisome, where TWNK unwinds the double-stranded DNA template prior to replication and SSBP1 covers the parental heavy strand to enable continuous replication of the entire mitochondrial genome. A single nucleotide incorporation cycle includes binding of the incoming nucleotide at the insertion site, a phosphodiester bond formation reaction that extends the 3'-end of the primer DNA, and translocation of the primer terminus to the post-insertion site. After completing replication of a mtDNA strand, mediates 3' -&gt; 5' exonucleolytic degradation at the nick to enable proper ligation. Highly accurate due to high nucleotide selectivity and 3' -&gt; 5' exonucleolytic proofreading. Proficiently corrects base substitutions, single-base additions and deletions in non-repetitive sequences and short repeats, but displays lower proofreading activity when replicating longer homopolymeric stretches. Exerts exonuclease activity toward single-stranded DNA and double-stranded DNA containing 3'-terminal mispairs. When a misincorporation occurs, transitions from replication to a pro-nucleolytic editing mode and removes the missincorporated nucleoside in the exonuclease active site. Proceeds via an SN2 nucleolytic mechanism in which Asp-198 catalyzes phosphodiester bond hydrolysis and Glu-200 stabilizes the leaving group. As a result the primer strand becomes one nucleotide shorter and is positioned in the post-insertion site, ready to resume DNA synthesis. Exerts 5'-deoxyribose phosphate (dRP) lyase activity and mediates repair-associated mtDNA synthesis (gap filling) in base-excision repair pathway. Catalyzes the release of the 5'-terminal 2-deoxyribose-5-phosphate sugar moiety from incised apurinic/apyrimidinic (AP) sites to produce a substrate for DNA ligase. The dRP lyase reaction does not require divalent metal ions and likely proceeds via a Schiff base intermediate in a beta-elimination reaction mechanism. This is DNA polymerase subunit gamma-1 from Homo sapiens (Human).